A 531-amino-acid chain; its full sequence is 2,3-bisphosphoglycerate-independent phosphoglycerate mutase (531 aa).

Mn(2+)-binding residues include Asp-13 and Ser-63. The Phosphoserine intermediate role is filled by Ser-63. Residues His-124, 154 to 155 (RD), Arg-187, Arg-193, 261 to 264 (RPDR), and Lys-342 contribute to the substrate site. The Mn(2+) site is built by Asp-420, His-424, Asp-462, His-463, and His-480.

This sequence belongs to the BPG-independent phosphoglycerate mutase family. Monomer. It depends on Mn(2+) as a cofactor.

It catalyses the reaction (2R)-2-phosphoglycerate = (2R)-3-phosphoglycerate. Its pathway is carbohydrate degradation; glycolysis; pyruvate from D-glyceraldehyde 3-phosphate: step 3/5. In terms of biological role, catalyzes the interconversion of 2-phosphoglycerate and 3-phosphoglycerate. This is 2,3-bisphosphoglycerate-independent phosphoglycerate mutase from Mycoplasma capricolum subsp. capricolum (strain California kid / ATCC 27343 / NCTC 10154).